Reading from the N-terminus, the 661-residue chain is MVEHVPFKLKSEFEPQGDQPQAIQKIVDGVNERKRHQTLLGATGTGKTFTMSNVIKEVGKPTLIIAHNKTLAGQLYSEFKEFFPENRVEYFVSYYDYYQPEAYVPSTDTFIEKDASINDEIDQLRHSATSSLFERDDVIIIASVSCIYGLGNPEEYKNLVVSVRVGMEMERSELLRKLVDVQYSRNDIDFQRGTFRVRGDVVEIFPASREEMCIRVEFFGDEIDRIREVNYLTGEVIREREHFTIFPASHFVTREEKMKVAIERIEKELEERLKELRDENKLLEAQRLEQRTNYDLEMMREMGFCSGIENYSVHLTLRPLGSTPYTLLDYFGDDWLVMIDESHVTLPQIRGMYNGDRARKQVLIDHGFRLPSALDNRPLKFEEFEEKTKQLVYVSATPGPYELEHTDEMVEQIIRPTGLLDPKIDVRPTENQIDDLLSEIQDRVDKDERVLVTTLTKKMSEDLTTYMKEAGIKVNYLHSEIKTLERIEIIRDLRMGTYDAIVGINLLREGIDIPEVSLVVILDADKEGFLRSDRSLIQTIGRAARNDKGEVIMYADKITDSMQYAIDETQRRREIQIAHNKEHGITPKTINKKIHDVISATVESDETNQQQQTELPKKMTKKERQKTIENIEKEMKKAAKDLDFEKATELRDMLFELKAEG.

One can recognise a Helicase ATP-binding domain in the interval 28 to 414; it reads DGVNERKRHQ…HTDEMVEQII (387 aa). 41–48 lines the ATP pocket; that stretch reads GATGTGKT. The Beta-hairpin motif lies at 94–117; the sequence is YYDYYQPEAYVPSTDTFIEKDASI. The 167-residue stretch at 432-598 folds into the Helicase C-terminal domain; the sequence is QIDDLLSEIQ…TINKKIHDVI (167 aa). Residues 603 to 624 are disordered; sequence ESDETNQQQQTELPKKMTKKER. The 36-residue stretch at 625–660 folds into the UVR domain; that stretch reads QKTIENIEKEMKKAAKDLDFEKATELRDMLFELKAE.

This sequence belongs to the UvrB family. As to quaternary structure, forms a heterotetramer with UvrA during the search for lesions. Interacts with UvrC in an incision complex.

Its subcellular location is the cytoplasm. Its function is as follows. The UvrABC repair system catalyzes the recognition and processing of DNA lesions. A damage recognition complex composed of 2 UvrA and 2 UvrB subunits scans DNA for abnormalities. Upon binding of the UvrA(2)B(2) complex to a putative damaged site, the DNA wraps around one UvrB monomer. DNA wrap is dependent on ATP binding by UvrB and probably causes local melting of the DNA helix, facilitating insertion of UvrB beta-hairpin between the DNA strands. Then UvrB probes one DNA strand for the presence of a lesion. If a lesion is found the UvrA subunits dissociate and the UvrB-DNA preincision complex is formed. This complex is subsequently bound by UvrC and the second UvrB is released. If no lesion is found, the DNA wraps around the other UvrB subunit that will check the other stand for damage. This Staphylococcus epidermidis (strain ATCC 12228 / FDA PCI 1200) protein is UvrABC system protein B.